The primary structure comprises 767 residues: Polyribonucleotide nucleotidyltransferase (767 aa).

Mg(2+) is bound by residues Asp-509 and Asp-515. The KH domain maps to 575-634; the sequence is PRILTVKVPIDKIGEVIGPKGKMINSIQDETGAEITIEDDGTIYIGATDGPSAEAARDAI. The 73-residue stretch at 646–718 folds into the S1 motif domain; the sequence is GERYLGTVVK…ERGKLSLVPV (73 aa). The disordered stretch occupies residues 725-767; the sequence is AVAAPNGGESPNGAKKTDASGNGAKQPRRRRRTRSSSRSSENT. Over residues 750–759 the composition is skewed to basic residues; that stretch reads QPRRRRRTRS.

Belongs to the polyribonucleotide nucleotidyltransferase family. The cofactor is Mg(2+).

It localises to the cytoplasm. The enzyme catalyses RNA(n+1) + phosphate = RNA(n) + a ribonucleoside 5'-diphosphate. Functionally, involved in mRNA degradation. Catalyzes the phosphorolysis of single-stranded polyribonucleotides processively in the 3'- to 5'-direction. In Thermobifida fusca (strain YX), this protein is Polyribonucleotide nucleotidyltransferase.